The chain runs to 338 residues: Probable protein S-acyltransferase 1 (338 aa).

The next 2 membrane-spanning stretches (helical) occupy residues 32–52 (DASSLLLTTCMIGGPAIAFSI) and 68–88 (LTLIGAILLTFMAFTFLFLTS). The 51-residue stretch at 142-192 (KFCDTCQLYRPPRAFHCSICNNCVQRFDHHCPWVGQCIALRNYPFFVCFLS) folds into the DHHC domain. The active-site S-palmitoyl cysteine intermediate is Cys172. Helical transmembrane passes span 186-206 (FFVCFLSCSTLLCIYVFVFSW) and 225-245 (ILGVLGLYCFVSVWFVGGLTV). Positions 319–338 (FGPKDTKMSSGKSDSEARER) are disordered. The segment covering 320–338 (GPKDTKMSSGKSDSEARER) has biased composition (basic and acidic residues).

Belongs to the DHHC palmitoyltransferase family.

The protein resides in the endosome membrane. It catalyses the reaction L-cysteinyl-[protein] + hexadecanoyl-CoA = S-hexadecanoyl-L-cysteinyl-[protein] + CoA. In terms of biological role, palmitoyl acyltransferase. The protein is Probable protein S-acyltransferase 1 (PAT01) of Arabidopsis thaliana (Mouse-ear cress).